A 667-amino-acid chain; its full sequence is Probable potassium transport system protein Kup (667 aa).

12 consecutive transmembrane segments (helical) span residues 16-36 (GFII…LYTM), 58-78 (VSLI…LIAL), 101-121 (WLII…ALTP), 146-166 (TNVI…QRFG), 167-187 (TGVI…VLGI), 221-241 (IFIL…YSDL), 253-273 (WPFV…WILA), 294-314 (VYLV…LISG), 343-363 (LYIP…VLYF), 373-393 (YGLA…YYLI), 399-419 (PLLA…FFLA), and 424-444 (FMHG…VMVI).

This sequence belongs to the HAK/KUP transporter (TC 2.A.72) family.

The protein localises to the cell membrane. The enzyme catalyses K(+)(in) + H(+)(in) = K(+)(out) + H(+)(out). Transport of potassium into the cell. Likely operates as a K(+):H(+) symporter. The sequence is that of Probable potassium transport system protein Kup from Streptococcus equi subsp. equi (strain 4047).